The following is a 225-amino-acid chain: Claudin-8 (225 aa).

Over 1–7 (MATYALQ) the chain is Cytoplasmic. Residues 8-28 (MAALVLGGVGMVGTVAVTIMP) traverse the membrane as a helical segment. Residues 29 to 81 (QWRVSAFIESNIVVFENRWEGLWMNCMRHANIRMQCKVYDSLLALSPDLQASR) lie on the Extracellular side of the membrane. Residues 82 to 102 (GLMCAASVLAFLAFMTAILGM) traverse the membrane as a helical segment. Topologically, residues 103-117 (KCTRCTGDDENVKSR) are cytoplasmic. A helical membrane pass occupies residues 118–138 (ILLTAGIIFFITGLVVLIPVS). Residues 139–166 (WVANSIIRDFYNPLVDVALKRELGEALY) are Extracellular-facing. A helical membrane pass occupies residues 167 to 187 (IGWTTALVLIAGGALFCCVFC). The Cytoplasmic portion of the chain corresponds to 188–225 (CTERSNSYRYSVPSHRTTQRSFHAEKRSPSIYSKSQYV). Residue Lys-213 forms a Glycyl lysine isopeptide (Lys-Gly) (interchain with G-Cter in ubiquitin) linkage. The segment at 224–225 (YV) is interactions with TJP1, TJP2 and TJP3.

The protein belongs to the claudin family. Can form heteropolymeric strands with other claudins. Interacts with CLDN4. Directly interacts with TJP1/ZO-1, TJP2/ZO-2 and TJP3/ZO-3. Interacts with KLHL3. Post-translationally, ubiquitinated by the BCR(KLHL3) E3 ubiquitin ligase complex in the kidney, leading to its degradation. In terms of tissue distribution, expressed primarily in lung and kidney. Present in both cortical and medullar collecting ducts (at protein level).

The protein localises to the cell junction. It is found in the tight junction. The protein resides in the cell membrane. It catalyses the reaction chloride(in) = chloride(out). The catalysed reaction is bromide(in) = bromide(out). The enzyme catalyses iodide(out) = iodide(in). It carries out the reaction fluoride(in) = fluoride(out). Functionally, can associate with other claudins to regulate tight junction structural and functional strand dynamics. May coassemble with CLDN4 into tight junction strands containing anion-selective channels that convey paracellular chloride permeability in renal collecting ducts. Cannot form tight junction strands on its own. The protein is Claudin-8 of Mus musculus (Mouse).